The chain runs to 76 residues: VpAmp1.0 (76 aa).

The N-terminal stretch at 1–22 (MKLINLVPVFFVLIIVVDYCHS) is a signal peptide. Isoleucine 41 bears the Isoleucine amide mark. Residues 42–76 (GKRSVESQRYVDLNRRDLEQDLQELQDFLDQISEH) constitute a propeptide that is removed on maturation.

The protein belongs to the non-disulfide-bridged peptide (NDBP) superfamily. Short antimicrobial peptide (group 4) family. In terms of tissue distribution, expressed by the venom gland.

It localises to the secreted. The protein resides in the target cell membrane. Functionally, antimicrobial peptide with potent activity against Gram-positive bacteria S.aureus (MIC=2.5 uM) and S.agalactiaea (MIC=2.5 uM), and Gram-negative bacteria E.coli (MIC=24 uM) and P.aeruginosa (MIC=2.5 uM), as well as against yeasts Candida albicans (MIC=6.25 uM) and C.glabrata (MIC&gt;50 uM). Also elicits high hemolysis on human erythrocytes (HC(50)=9.2 uM). The chain is VpAmp1.0 from Mesomexovis punctatus (Scorpion).